Here is a 104-residue protein sequence, read N- to C-terminus: L-rhamnose mutarotase (104 aa).

Y18 contributes to the substrate binding site. H22 acts as the Proton donor in catalysis. Substrate is bound by residues Y41 and 76–77; that span reads WW.

Belongs to the rhamnose mutarotase family. As to quaternary structure, homodimer.

It localises to the cytoplasm. The enzyme catalyses alpha-L-rhamnose = beta-L-rhamnose. The protein operates within carbohydrate metabolism; L-rhamnose metabolism. In terms of biological role, involved in the anomeric conversion of L-rhamnose. The polypeptide is L-rhamnose mutarotase (Shigella sonnei (strain Ss046)).